The following is a 410-amino-acid chain: Probable intron-encoded endonuclease bI1 (410 aa).

Residues 1 to 131 (MRLLKTHPIL…VLMMAIAFLG (131 aa)) are COB exon 1 encoded. 3 helical membrane-spanning segments follow: residues 32 to 52 (FGSL…FLAM), 75 to 95 (GWLI…FVYL), and 112 to 132 (LLWS…FLGF). The segment at 132-410 (FNGQKYMCFY…KKNYIVKVIK (279 aa)) is COB intron 1 encoded. A GIY-YIG domain is found at 196-286 (PFSGIYMIVN…LETLKPEYNI (91 aa)).

It to endonucleases of group I introns of fungi and phage. In terms of processing, the mature protein may arise from proteolytic cleavage of an in-frame translation of COB exon 1 plus intron 1, containing the bI1 open reading frame.

The protein resides in the mitochondrion. The protein localises to the membrane. Its function is as follows. Mitochondrial DNA endonuclease involved in intron homing. The sequence is that of Probable intron-encoded endonuclease bI1 (bI1) from Mycosarcoma maydis (Corn smut fungus).